A 532-amino-acid polypeptide reads, in one-letter code: KICSTOR complex protein ITFG2 (532 aa).

Residues 19 to 48 form an FG-GAP 1; atypical repeat; that stretch reads FPHAICLGDVDNDTLNELVVGDTSGKLSVY. Ser104 carries the post-translational modification Phosphoserine. Residues 126 to 155 form an FG-GAP 2; atypical repeat; sequence NTKVMLISDIDGDGRCELVVGYTDRVVRAF. The disordered stretch occupies residues 248–271; sequence PHPQQERLHSPHRQHQASHSPDSS.

Part of the KICSTOR complex composed of KPTN, ITFG2, KICS2 and SZT2. SZT2 probably serves as a link between the other three proteins in the KICSTOR complex and may mediate the direct interaction with the GATOR complex via GATOR1. The KICSTOR complex interacts directly with the GATOR1 complex and most probably indirectly with the GATOR2 complex in an amino acid-independent manner.

The protein resides in the lysosome membrane. In terms of biological role, as part of the KICSTOR complex functions in the amino acid-sensing branch of the TORC1 signaling pathway. Recruits, in an amino acid-independent manner, the GATOR1 complex to the lysosomal membranes and allows its interaction with GATOR2 and the RAG GTPases. Functions upstream of the RAG GTPases and is required to negatively regulate mTORC1 signaling in absence of amino acids. In absence of the KICSTOR complex mTORC1 is constitutively localized to the lysosome and activated. The KICSTOR complex is also probably involved in the regulation of mTORC1 by glucose. This Bos taurus (Bovine) protein is KICSTOR complex protein ITFG2.